The chain runs to 183 residues: Small ribosomal subunit protein bS20c (183 aa).

The transit peptide at 1-68 directs the protein to the chloroplast; that stretch reads MAAISMACVS…FQRRGFSVVC (68 aa). The tract at residues 79–99 is disordered; it reads AAKRTRQAETRRLRNKARKSE.

In terms of assembly, component of the chloroplast small ribosomal subunit (SSU). Mature 70S chloroplast ribosomes of higher plants consist of a small (30S) and a large (50S) subunit. The 30S small subunit contains 1 molecule of ribosomal RNA (16S rRNA) and 24 different proteins. The 50S large subunit contains 3 rRNA molecules (23S, 5S and 4.5S rRNA) and 33 different proteins.

The protein localises to the plastid. It localises to the chloroplast. In terms of biological role, component of the chloroplast ribosome (chloro-ribosome), a dedicated translation machinery responsible for the synthesis of chloroplast genome-encoded proteins, including proteins of the transcription and translation machinery and components of the photosynthetic apparatus. The protein is Small ribosomal subunit protein bS20c (RPS20) of Spinacia oleracea (Spinach).